The sequence spans 189 residues: Elongation factor P (189 aa).

The residue at position 34 (K34) is an N6-(3,6-diaminohexanoyl)-5-hydroxylysine.

Belongs to the elongation factor P family. Post-translationally, may be beta-lysylated on the epsilon-amino group of Lys-34 by the combined action of EpmA and EpmB, and then hydroxylated on the C5 position of the same residue by EpmC (if this protein is present). Lysylation is critical for the stimulatory effect of EF-P on peptide-bond formation. The lysylation moiety may extend toward the peptidyltransferase center and stabilize the terminal 3-CCA end of the tRNA. Hydroxylation of the C5 position on Lys-34 may allow additional potential stabilizing hydrogen-bond interactions with the P-tRNA.

The protein localises to the cytoplasm. It functions in the pathway protein biosynthesis; polypeptide chain elongation. In terms of biological role, involved in peptide bond synthesis. Alleviates ribosome stalling that occurs when 3 or more consecutive Pro residues or the sequence PPG is present in a protein, possibly by augmenting the peptidyl transferase activity of the ribosome. Modification of Lys-34 is required for alleviation. The chain is Elongation factor P from Alkalilimnicola ehrlichii (strain ATCC BAA-1101 / DSM 17681 / MLHE-1).